A 398-amino-acid polypeptide reads, in one-letter code: Nocardicin C N-oxygenase (398 aa).

The segment at arginine 63–proline 90 is disordered. Positions 93, 97, 289, 345, and 347 each coordinate heme.

It belongs to the cytochrome P450 family. Heme serves as cofactor.

It catalyses the reaction nocardicin C + 4 reduced [2Fe-2S]-[ferredoxin] + 2 O2 + 2 H(+) = nocardicin A + 4 oxidized [2Fe-2S]-[ferredoxin] + 3 H2O. Its pathway is antibiotic biosynthesis. Involved in the biosynthesis of the beta-lactam antibiotic nocardicin A. Catalyzes the conversion of nocardicin C to nocardicin A. Cannot use nocardicin G. The chain is Nocardicin C N-oxygenase from Nocardia uniformis subsp. tsuyamanensis.